A 433-amino-acid chain; its full sequence is Trigger factor (433 aa).

A PPIase FKBP-type domain is found at Gly166 to Pro251.

This sequence belongs to the FKBP-type PPIase family. Tig subfamily.

Its subcellular location is the cytoplasm. The catalysed reaction is [protein]-peptidylproline (omega=180) = [protein]-peptidylproline (omega=0). Its function is as follows. Involved in protein export. Acts as a chaperone by maintaining the newly synthesized protein in an open conformation. Functions as a peptidyl-prolyl cis-trans isomerase. The sequence is that of Trigger factor from Aliarcobacter butzleri (strain RM4018) (Arcobacter butzleri).